Consider the following 329-residue polypeptide: Lipoyl synthase (329 aa).

Cysteine 55, cysteine 60, cysteine 66, cysteine 81, cysteine 85, cysteine 88, and serine 292 together coordinate [4Fe-4S] cluster. Residues 67–281 (WEDREATFLI…KAEAEAIGFL (215 aa)) enclose the Radical SAM core domain.

The protein belongs to the radical SAM superfamily. Lipoyl synthase family. Requires [4Fe-4S] cluster as cofactor.

Its subcellular location is the cytoplasm. The catalysed reaction is [[Fe-S] cluster scaffold protein carrying a second [4Fe-4S](2+) cluster] + N(6)-octanoyl-L-lysyl-[protein] + 2 oxidized [2Fe-2S]-[ferredoxin] + 2 S-adenosyl-L-methionine + 4 H(+) = [[Fe-S] cluster scaffold protein] + N(6)-[(R)-dihydrolipoyl]-L-lysyl-[protein] + 4 Fe(3+) + 2 hydrogen sulfide + 2 5'-deoxyadenosine + 2 L-methionine + 2 reduced [2Fe-2S]-[ferredoxin]. The protein operates within protein modification; protein lipoylation via endogenous pathway; protein N(6)-(lipoyl)lysine from octanoyl-[acyl-carrier-protein]: step 2/2. Functionally, catalyzes the radical-mediated insertion of two sulfur atoms into the C-6 and C-8 positions of the octanoyl moiety bound to the lipoyl domains of lipoate-dependent enzymes, thereby converting the octanoylated domains into lipoylated derivatives. The protein is Lipoyl synthase of Clavibacter sepedonicus (Clavibacter michiganensis subsp. sepedonicus).